The chain runs to 458 residues: UDP-N-acetylmuramate--L-alanine ligase (458 aa).

Glycine 118–threonine 124 lines the ATP pocket.

Belongs to the MurCDEF family.

It is found in the cytoplasm. It catalyses the reaction UDP-N-acetyl-alpha-D-muramate + L-alanine + ATP = UDP-N-acetyl-alpha-D-muramoyl-L-alanine + ADP + phosphate + H(+). It participates in cell wall biogenesis; peptidoglycan biosynthesis. In terms of biological role, cell wall formation. This is UDP-N-acetylmuramate--L-alanine ligase from Clostridium botulinum (strain Kyoto / Type A2).